A 137-amino-acid chain; its full sequence is ATP synthase epsilon chain, chloroplastic (137 aa).

This sequence belongs to the ATPase epsilon chain family. As to quaternary structure, F-type ATPases have 2 components, CF(1) - the catalytic core - and CF(0) - the membrane proton channel. CF(1) has five subunits: alpha(3), beta(3), gamma(1), delta(1), epsilon(1). CF(0) has three main subunits: a, b and c.

The protein resides in the plastid. It localises to the chloroplast thylakoid membrane. Its function is as follows. Produces ATP from ADP in the presence of a proton gradient across the membrane. In Medicago sativa (Alfalfa), this protein is ATP synthase epsilon chain, chloroplastic.